We begin with the raw amino-acid sequence, 369 residues long: DNA replication and repair protein RecF (369 aa).

30-37 serves as a coordination point for ATP; that stretch reads GDNGSGKT.

This sequence belongs to the RecF family.

It localises to the cytoplasm. Its function is as follows. The RecF protein is involved in DNA metabolism; it is required for DNA replication and normal SOS inducibility. RecF binds preferentially to single-stranded, linear DNA. It also seems to bind ATP. The polypeptide is DNA replication and repair protein RecF (Pseudomonas aeruginosa (strain UCBPP-PA14)).